Here is an 88-residue protein sequence, read N- to C-terminus: Small ribosomal subunit protein uS19 (88 aa).

The protein belongs to the universal ribosomal protein uS19 family.

In terms of biological role, protein S19 forms a complex with S13 that binds strongly to the 16S ribosomal RNA. The polypeptide is Small ribosomal subunit protein uS19 (Carsonella ruddii (strain PV)).